The chain runs to 297 residues: HTH-type transcriptional regulator ArgP (297 aa).

Positions 4–60 (PDYRTLQALDAVIRERGFERAAQKLCITQSAVSQRIKQLENMFGQPLLVRTVPPRPT) constitute an HTH lysR-type domain. Residues 21–40 (FERAAQKLCITQSAVSQRIK) constitute a DNA-binding region (H-T-H motif).

It belongs to the LysR transcriptional regulatory family. As to quaternary structure, homodimer.

Controls the transcription of genes involved in arginine and lysine metabolism. In Escherichia fergusonii (strain ATCC 35469 / DSM 13698 / CCUG 18766 / IAM 14443 / JCM 21226 / LMG 7866 / NBRC 102419 / NCTC 12128 / CDC 0568-73), this protein is HTH-type transcriptional regulator ArgP.